We begin with the raw amino-acid sequence, 270 residues long: DNA packaging protein OPG160 (270 aa).

Residue 55 to 62 coordinates ATP; the sequence is VYNPDYDG.

This sequence belongs to the orthopoxvirus OPG160 protein family. Interacts with protein OPG137.

Functionally, participates in viral DNA packaging and virion morphogenesis. This is DNA packaging protein OPG160 (OPG160) from Homo sapiens (Human).